Here is a 424-residue protein sequence, read N- to C-terminus: UDP-N-acetylglucosamine 1-carboxyvinyltransferase (424 aa).

22-23 (KN) is a phosphoenolpyruvate binding site. Arg93 is a UDP-N-acetyl-alpha-D-glucosamine binding site. The active-site Proton donor is the Cys117. Residue Cys117 is modified to 2-(S-cysteinyl)pyruvic acid O-phosphothioketal. Residues 162-165 (KVSV), Asp307, and Ile329 each bind UDP-N-acetyl-alpha-D-glucosamine.

It belongs to the EPSP synthase family. MurA subfamily.

Its subcellular location is the cytoplasm. It carries out the reaction phosphoenolpyruvate + UDP-N-acetyl-alpha-D-glucosamine = UDP-N-acetyl-3-O-(1-carboxyvinyl)-alpha-D-glucosamine + phosphate. It functions in the pathway cell wall biogenesis; peptidoglycan biosynthesis. Cell wall formation. Adds enolpyruvyl to UDP-N-acetylglucosamine. The protein is UDP-N-acetylglucosamine 1-carboxyvinyltransferase of Glaesserella parasuis serovar 5 (strain SH0165) (Haemophilus parasuis).